The sequence spans 447 residues: Serine/threonine-protein phosphatase 2A 55 kDa regulatory subunit B gamma isoform (447 aa).

WD repeat units lie at residues 22 to 61, 87 to 128, 171 to 209, 220 to 260, 279 to 317, 334 to 375, and 410 to 446; these read TEAD…KNAP, EIEE…KRPE, GHTY…RSFN, DLTE…LCDK, EIIS…RPIE, ESDC…DVTL, and DFTK…NSDM.

The protein belongs to the phosphatase 2A regulatory subunit B family. PP2A consists of a common heterodimeric core enzyme, composed of a 36 kDa catalytic subunit (subunit C) and a 65 kDa constant regulatory subunit (PR65 or subunit A), that associates with a variety of regulatory subunits. Proteins that associate with the core dimer include three families of regulatory subunits B (the R2/B/PR55/B55, R3/B''/PR72/PR130/PR59 and R5/B'/B56 families), the 48 kDa variable regulatory subunit, viral proteins, and cell signaling molecules. Interacts with IER5. As to expression, highly expressed in brain.

Its function is as follows. The B regulatory subunit might modulate substrate selectivity and catalytic activity, and might also direct the localization of the catalytic enzyme to a particular subcellular compartment. The chain is Serine/threonine-protein phosphatase 2A 55 kDa regulatory subunit B gamma isoform (Ppp2r2c) from Rattus norvegicus (Rat).